A 159-amino-acid chain; its full sequence is uncharacterized protein (159 aa).

2 helical membrane passes run 59–79 (IGALAAMLAVLSFALGCALVY) and 91–113 (VFSVLSGLLYGGGAVLWGLRRVC).

Its subcellular location is the cell membrane. This is an uncharacterized protein from Treponema pallidum (strain Nichols).